Reading from the N-terminus, the 138-residue chain is Basic phospholipase A2 RV-4 (138 aa).

The signal sequence occupies residues 1 to 16 (MRTLWIVAVCLIGVEG). Intrachain disulfides connect C42-C131, C44-C60, C59-C111, C65-C138, C66-C104, C73-C97, and C91-C102. Ca(2+)-binding residues include Y43, G45, and G47. H63 is an active-site residue. D64 contributes to the Ca(2+) binding site. D105 is a catalytic residue.

It belongs to the phospholipase A2 family. Group II subfamily. D49 sub-subfamily. In terms of assembly, heterodimer of a weakly toxic basic protein having phospholipase A2 activity (RV-4) and a non-toxic acidic protein which inhibits its enzymatic activity but potentiates its lethal potency and neurotoxicity (RV-7). Requires Ca(2+) as cofactor. Expressed by the venom gland.

The protein resides in the secreted. It catalyses the reaction a 1,2-diacyl-sn-glycero-3-phosphocholine + H2O = a 1-acyl-sn-glycero-3-phosphocholine + a fatty acid + H(+). Its function is as follows. Heterodimer RV-4/RV-7: acts as a presynaptic neurotoxin. Monomer: snake venom phospholipase A2 (PLA2) that acts as a presynaptic neurotoxin. PLA2 catalyzes the calcium-dependent hydrolysis of the 2-acyl groups in 3-sn-phosphoglycerides. In Daboia siamensis (Eastern Russel's viper), this protein is Basic phospholipase A2 RV-4.